The chain runs to 459 residues: Taurine--pyruvate aminotransferase (459 aa).

K287 carries the post-translational modification N6-(pyridoxal phosphate)lysine.

Belongs to the class-III pyridoxal-phosphate-dependent aminotransferase family. Requires pyridoxal 5'-phosphate as cofactor.

The protein localises to the cytoplasm. The catalysed reaction is taurine + pyruvate = sulfoacetaldehyde + L-alanine. It participates in organosulfur degradation; taurine degradation via aerobic pathway; acetyl phosphate and sulfite from taurine: step 1/2. Functionally, catalyzes the degradation of taurine into alanine and sulfoacetaldehyde. The protein is Taurine--pyruvate aminotransferase of Rhodobacter capsulatus (strain ATCC BAA-309 / NBRC 16581 / SB1003).